The chain runs to 320 residues: Foldase protein PrsA (320 aa).

A signal peptide spans 1–20 (MKMINKLIVPVTASALLLGA). The N-palmitoyl cysteine moiety is linked to residue Cys-21. Cys-21 carries S-diacylglycerol cysteine lipidation. Residues 139–245 (EDSKKASHIL…FGYHIIKADK (107 aa)) form the PpiC domain. Residues 159-198 (EGLDDKEAKQKAEEIQKEVSKDPSKFGEIAKKESMDTGSA) are disordered.

Belongs to the PrsA family.

The protein resides in the cell membrane. The enzyme catalyses [protein]-peptidylproline (omega=180) = [protein]-peptidylproline (omega=0). Its function is as follows. Plays a major role in protein secretion by helping the post-translocational extracellular folding of several secreted proteins. The polypeptide is Foldase protein PrsA (Staphylococcus aureus (strain MRSA252)).